A 471-amino-acid polypeptide reads, in one-letter code: Putative F-box protein At5g36200 (471 aa).

The region spanning Met1–Leu46 is the F-box domain.

This chain is Putative F-box protein At5g36200, found in Arabidopsis thaliana (Mouse-ear cress).